A 600-amino-acid polypeptide reads, in one-letter code: Elongation factor 4 (600 aa).

The tr-type G domain maps to 6–188; sequence QFIRNFSIIA…QITKQIPSPK (183 aa). GTP contacts are provided by residues 18 to 23 and 135 to 138; these read DHGKST and NKID.

The protein belongs to the TRAFAC class translation factor GTPase superfamily. Classic translation factor GTPase family. LepA subfamily.

It localises to the cell inner membrane. The enzyme catalyses GTP + H2O = GDP + phosphate + H(+). Required for accurate and efficient protein synthesis under certain stress conditions. May act as a fidelity factor of the translation reaction, by catalyzing a one-codon backward translocation of tRNAs on improperly translocated ribosomes. Back-translocation proceeds from a post-translocation (POST) complex to a pre-translocation (PRE) complex, thus giving elongation factor G a second chance to translocate the tRNAs correctly. Binds to ribosomes in a GTP-dependent manner. The chain is Elongation factor 4 from Leptospira interrogans serogroup Icterohaemorrhagiae serovar copenhageni (strain Fiocruz L1-130).